The chain runs to 546 residues: CTP synthase (546 aa).

The segment at 1-269 is amidoligase domain; that stretch reads MNSNTKIIFV…DAKLVELLNL (269 aa). Ser16 contributes to the CTP binding site. Ser16 is a UTP binding site. Residues 17–22 and Asp74 each bind ATP; that span reads SLGKGV. The Mg(2+) site is built by Asp74 and Glu143. Residues 150–152, 190–195, and Lys226 each bind CTP; these read DIE and KTKPTQ. Residues 190–195 and Lys226 each bind UTP; that span reads KTKPTQ. Residues 294-546 form the Glutamine amidotransferase type-1 domain; the sequence is IIAMVGKYVS…IQAAIENSNN (253 aa). Gly356 contacts L-glutamine. The active-site Nucleophile; for glutamine hydrolysis is Cys383. Residues 384 to 387, Glu407, and Arg474 contribute to the L-glutamine site; that span reads LGMQ. Residues His519 and Glu521 contribute to the active site.

It belongs to the CTP synthase family. Homotetramer.

It catalyses the reaction UTP + L-glutamine + ATP + H2O = CTP + L-glutamate + ADP + phosphate + 2 H(+). The enzyme catalyses L-glutamine + H2O = L-glutamate + NH4(+). It carries out the reaction UTP + NH4(+) + ATP = CTP + ADP + phosphate + 2 H(+). The protein operates within pyrimidine metabolism; CTP biosynthesis via de novo pathway; CTP from UDP: step 2/2. Its activity is regulated as follows. Allosterically activated by GTP, when glutamine is the substrate; GTP has no effect on the reaction when ammonia is the substrate. The allosteric effector GTP functions by stabilizing the protein conformation that binds the tetrahedral intermediate(s) formed during glutamine hydrolysis. Inhibited by the product CTP, via allosteric rather than competitive inhibition. Its function is as follows. Catalyzes the ATP-dependent amination of UTP to CTP with either L-glutamine or ammonia as the source of nitrogen. Regulates intracellular CTP levels through interactions with the four ribonucleotide triphosphates. This chain is CTP synthase, found in Francisella tularensis subsp. holarctica (strain FTNF002-00 / FTA).